The chain runs to 400 residues: MSGCQFNQPYCPRSEEKKSIAESIEKATLMEPSIDAQSAQKGVYYGSYLKLDELLNIQECESVKVGAPAHEEMLFIIIHQTYELWFKQMIHEIDSIRSIMSTPPTPERLNGVIVNRLGRITEIQKLLVDQISILETMTSVDFLEFRNLLVPASGFQSVQFRMIENKLGILPNTRVQYQQHHYHSFFNEKDRKALQATENEVSLLQLVIQWLERNPFLYYKGYDFWSSYKSAVDQILENDLQRIQANNDLSQDMKDQSTKEAKKNMESFSTLFDEVAYNERLEKGEVRLSYKALQSAILIYLYKDEPIFHTPFLILNLLTEIDELLTMWRFRHTMMVQRIIGAKIGTGGSSGYHYLRTTVGDRYKIFLDLFNISSYLIPKNTLPQLPKVVKEQMDFAWSIL.

Substrate is bound by residues 75-79 and Arg-146; that span reads FIIIH. Heme is bound at residue His-332. Thr-346 contributes to the substrate binding site.

Belongs to the tryptophan 2,3-dioxygenase family. As to quaternary structure, homotetramer. Dimer of dimers. Heme is required as a cofactor.

The enzyme catalyses L-tryptophan + O2 = N-formyl-L-kynurenine. Its pathway is amino-acid degradation; L-tryptophan degradation via kynurenine pathway; L-kynurenine from L-tryptophan: step 1/2. In terms of biological role, heme-dependent dioxygenase that catalyzes the oxidative cleavage of the L-tryptophan (L-Trp) pyrrole ring and converts L-tryptophan to N-formyl-L-kynurenine. Catalyzes the oxidative cleavage of the indole moiety. The protein is Tryptophan 2,3-dioxygenase of Dictyostelium discoideum (Social amoeba).